The chain runs to 178 residues: uncharacterized protein (178 aa).

Disordered regions lie at residues 89–115 (NEEQ…RLSI) and 136–178 (DMPT…EIKA). Over residues 98-109 (ASHGSTSSATST) the composition is skewed to low complexity. Residues 167 to 178 (DSDEEEEEEIKA) show a composition bias toward acidic residues.

The protein resides in the cytoplasm. Its subcellular location is the nucleus. This is an uncharacterized protein from Schizosaccharomyces pombe (strain 972 / ATCC 24843) (Fission yeast).